Here is a 296-residue protein sequence, read N- to C-terminus: MTAPTPTPANAATPYGTLPPASPLPQRRPVSLPRLAQMREAGEKITMLTAYDATFAAVADAAGVECLLVGDSLGMVCQGLPSTVGVSLDTMAYHTASVARGLHRVQGTAWLIADLPYGSYAEGPEQAMRSACTLMQAGAHMVKLEGGGWTAPTVRFLVERGVPVCAHLGLTPQTVHALGGYRVQGRSDEAARALRSQANELQDAGAAMLVLEMVPATLAREVTDALPRCHTIGIGAGSGTAGQVLVLHDMLGVNLGKNPKFAHDFMAQAGSVRGAIEAYVQAVKAGRFPDDALHAW.

A compositionally biased stretch (low complexity) spans 1-14; the sequence is MTAPTPTPANAATP. The interval 1 to 29 is disordered; it reads MTAPTPTPANAATPYGTLPPASPLPQRRP. Mg(2+) is bound by residues aspartate 71 and aspartate 114. Residues 71-72, aspartate 114, and lysine 143 contribute to the 3-methyl-2-oxobutanoate site; that span reads DS. Glutamate 145 contacts Mg(2+). Glutamate 212 acts as the Proton acceptor in catalysis.

The protein belongs to the PanB family. As to quaternary structure, homodecamer; pentamer of dimers. Requires Mg(2+) as cofactor.

It is found in the cytoplasm. It catalyses the reaction 3-methyl-2-oxobutanoate + (6R)-5,10-methylene-5,6,7,8-tetrahydrofolate + H2O = 2-dehydropantoate + (6S)-5,6,7,8-tetrahydrofolate. It functions in the pathway cofactor biosynthesis; (R)-pantothenate biosynthesis; (R)-pantoate from 3-methyl-2-oxobutanoate: step 1/2. Catalyzes the reversible reaction in which hydroxymethyl group from 5,10-methylenetetrahydrofolate is transferred onto alpha-ketoisovalerate to form ketopantoate. The polypeptide is 3-methyl-2-oxobutanoate hydroxymethyltransferase (Paracidovorax citrulli (strain AAC00-1) (Acidovorax citrulli)).